The following is a 197-amino-acid chain: MNLIGSYQHHHHHMMPDPFIFSPGSRCHQERPYFQGWVLNPGEVSPEFPAQPPYSPEYGAVVGPSQTSGRIENLGGKLGRRKGAPPKKERRRTESINSAFAELRECIPNVPADTKLSKIKTLRLATSYIGYLMDVLAKDSEPGGTEAFKAEIKKVDGKRRREPQPTEGYWGAAPAGEKKLKGRTGWPQQVWALELNP.

Disordered regions lie at residues 61–94 (VVGPSQTSGRIENLGGKLGRRKGAPPKKERRRTE) and 155–184 (VDGKRRREPQPTEGYWGAAPAGEKKLKGRT). The span at 78–90 (LGRRKGAPPKKER) shows a compositional bias: basic residues. The region spanning 80–132 (RRKGAPPKKERRRTESINSAFAELRECIPNVPADTKLSKIKTLRLATSYIGYL) is the bHLH domain.

Efficient DNA binding requires dimerization with another bHLH protein. Highly expressed in the adult heart and expressed at lower levels in the intestine and gall bladder.

The protein resides in the nucleus. The protein localises to the nucleolus. Its function is as follows. Plays an essential role in cardiac morphogenesis. The polypeptide is Heart- and neural crest derivatives-expressed protein 1 (hand1) (Xenopus laevis (African clawed frog)).